Consider the following 307-residue polypeptide: Pyridoxal 5'-phosphate synthase subunit PdxS (307 aa).

Position 37 (D37) interacts with D-ribose 5-phosphate. K94 serves as the catalytic Schiff-base intermediate with D-ribose 5-phosphate. A D-ribose 5-phosphate-binding site is contributed by G166. Residue R178 coordinates D-glyceraldehyde 3-phosphate. D-ribose 5-phosphate is bound by residues G227 and 248 to 249 (GS).

The protein belongs to the PdxS/SNZ family. As to quaternary structure, in the presence of PdxT, forms a dodecamer of heterodimers.

It catalyses the reaction aldehydo-D-ribose 5-phosphate + D-glyceraldehyde 3-phosphate + L-glutamine = pyridoxal 5'-phosphate + L-glutamate + phosphate + 3 H2O + H(+). It participates in cofactor biosynthesis; pyridoxal 5'-phosphate biosynthesis. Catalyzes the formation of pyridoxal 5'-phosphate from ribose 5-phosphate (RBP), glyceraldehyde 3-phosphate (G3P) and ammonia. The ammonia is provided by the PdxT subunit. Can also use ribulose 5-phosphate and dihydroxyacetone phosphate as substrates, resulting from enzyme-catalyzed isomerization of RBP and G3P, respectively. This Mycobacterium leprae (strain Br4923) protein is Pyridoxal 5'-phosphate synthase subunit PdxS.